Reading from the N-terminus, the 274-residue chain is Probable ribosomal RNA small subunit methyltransferase A (274 aa).

Residues histidine 22, leucine 24, glycine 50, glutamate 71, aspartate 99, and asparagine 114 each coordinate S-adenosyl-L-methionine.

It belongs to the class I-like SAM-binding methyltransferase superfamily. rRNA adenine N(6)-methyltransferase family. RsmA subfamily.

The protein localises to the cytoplasm. Its function is as follows. Specifically dimethylates two adjacent adenosines in the loop of a conserved hairpin near the 3'-end of 16S rRNA in the 30S particle. May play a critical role in biogenesis of 30S subunits. The chain is Probable ribosomal RNA small subunit methyltransferase A from Natronomonas pharaonis (strain ATCC 35678 / DSM 2160 / CIP 103997 / JCM 8858 / NBRC 14720 / NCIMB 2260 / Gabara) (Halobacterium pharaonis).